Consider the following 461-residue polypeptide: L-seryl-tRNA(Sec) selenium transferase (461 aa).

Lys-294 carries the post-translational modification N6-(pyridoxal phosphate)lysine.

The protein belongs to the SelA family. The cofactor is pyridoxal 5'-phosphate.

It localises to the cytoplasm. The catalysed reaction is L-seryl-tRNA(Sec) + selenophosphate + H(+) = L-selenocysteinyl-tRNA(Sec) + phosphate. Its pathway is aminoacyl-tRNA biosynthesis; selenocysteinyl-tRNA(Sec) biosynthesis; selenocysteinyl-tRNA(Sec) from L-seryl-tRNA(Sec) (bacterial route): step 1/1. Functionally, converts seryl-tRNA(Sec) to selenocysteinyl-tRNA(Sec) required for selenoprotein biosynthesis. The protein is L-seryl-tRNA(Sec) selenium transferase of Actinobacillus pleuropneumoniae serotype 5b (strain L20).